Reading from the N-terminus, the 512-residue chain is Cytochrome P450 4d1 (512 aa).

Positions 316 and 456 each coordinate heme.

Belongs to the cytochrome P450 family. It depends on heme as a cofactor.

The protein localises to the endoplasmic reticulum membrane. Its subcellular location is the microsome membrane. Its function is as follows. Involved in the metabolism of insect hormones and in the breakdown of synthetic insecticides. The polypeptide is Cytochrome P450 4d1 (Cyp4d1) (Drosophila melanogaster (Fruit fly)).